We begin with the raw amino-acid sequence, 1006 residues long: Unconventional myosin-Id (1006 aa).

Alanine 2 bears the N-acetylalanine mark. The 687-residue stretch at 9–695 folds into the Myosin motor domain; that stretch reads FGKADFVLMD…TLFTLEELRA (687 aa). 102–109 serves as a coordination point for ATP; that stretch reads GESGAGKT. Serine 200 is modified (phosphoserine). Residue tyrosine 536 is modified to Phosphotyrosine. Residues 572 to 594 form an actin-binding region; the sequence is MIALVDNLASKEPYYVRCIKPND. IQ domains are found at residues 699 to 719 and 721 to 741; these read VRVV…MRYK and TKAA…SYIH. An interaction with calmodulin region spans residues 776-896; it reads LQSIFNRWRA…MDPTKQYKVM (121 aa). Residues 812–1005 form the TH1 domain; it reads GQRADLGLQR…RSGFILSVPG (194 aa).

The protein belongs to the TRAFAC class myosin-kinesin ATPase superfamily. Myosin family. Interacts (via the two IQ motifs) with calmodulin. Binds an additional calmodulin chain via a third, C-terminal region. Interacts with F-actin. In terms of tissue distribution, detected on tracheal epithelial cells, and on epithelial cells and brush border cells in duodenum, jejunum and ileum. Detected on myelinated white matter in the cerebellum, and the myelinated part of the optic nerve. Detected on mature oligodendrocites. Detected on the outside of the myelin sheet that surrounds axons (at protein level). Ubiquitous. Highest levels in adult brain, and spinal cord. Moderate levels in lung, kidney, liver and spleen. Low levels in testis and heart (at protein level).

The protein resides in the cytoplasm. Its subcellular location is the perikaryon. It is found in the cell projection. The protein localises to the dendrite. It localises to the early endosome. The protein resides in the cell cortex. Unconventional myosin that functions as actin-based motor protein with ATPase activity. Plays a role in endosomal protein trafficking, and especially in the transfer of cargo proteins from early to recycling endosomes. Required for normal planar cell polarity in ciliated tracheal cells, for normal rotational polarity of cilia, and for coordinated, unidirectional ciliary movement in the trachea. Required for normal, polarized cilia organization in brain ependymal epithelial cells. In Rattus norvegicus (Rat), this protein is Unconventional myosin-Id (Myo1d).